A 335-amino-acid chain; its full sequence is Dihydroorotate dehydrogenase (quinone) (335 aa).

FMN is bound by residues 59 to 63 (AGLDK) and Thr-83. Lys-63 contributes to the substrate binding site. 108–112 (NRMGF) lines the substrate pocket. FMN is bound by residues Asn-136 and Asn-169. Position 169 (Asn-169) interacts with substrate. Residue Ser-172 is the Nucleophile of the active site. Position 174 (Asn-174) interacts with substrate. Residues Lys-214 and Thr-242 each contribute to the FMN site. 243 to 244 (NT) provides a ligand contact to substrate. FMN-binding positions include Gly-265, Gly-294, and 315–316 (YS).

The protein belongs to the dihydroorotate dehydrogenase family. Type 2 subfamily. Monomer. FMN serves as cofactor.

It is found in the cell membrane. The enzyme catalyses (S)-dihydroorotate + a quinone = orotate + a quinol. It participates in pyrimidine metabolism; UMP biosynthesis via de novo pathway; orotate from (S)-dihydroorotate (quinone route): step 1/1. Its function is as follows. Catalyzes the conversion of dihydroorotate to orotate with quinone as electron acceptor. The protein is Dihydroorotate dehydrogenase (quinone) of Neisseria gonorrhoeae (strain ATCC 700825 / FA 1090).